The sequence spans 246 residues: Proteasome subunit alpha type-6 (246 aa).

Belongs to the peptidase T1A family. In terms of assembly, the 26S proteasome consists of a 20S proteasome core and two 19S regulatory subunits. The 20S proteasome core is composed of 28 subunits that are arranged in four stacked rings, resulting in a barrel-shaped structure. The two end rings are each formed by seven alpha subunits, and the two central rings are each formed by seven beta subunits. The catalytic chamber with the active sites is on the inside of the barrel.

Its subcellular location is the cytoplasm. It is found in the nucleus. Functionally, the proteasome is a multicatalytic proteinase complex which is characterized by its ability to cleave peptides with Arg, Phe, Tyr, Leu, and Glu adjacent to the leaving group at neutral or slightly basic pH. The proteasome has an ATP-dependent proteolytic activity. This is Proteasome subunit alpha type-6 (PAA1) from Oryza sativa subsp. japonica (Rice).